A 681-amino-acid chain; its full sequence is DNA-directed RNA polymerase subunit beta' (681 aa).

Zn(2+) is bound by residues C69, C71, C87, and C90. D489, D491, and D493 together coordinate Mg(2+).

This sequence belongs to the RNA polymerase beta' chain family. RpoC1 subfamily. In plastids the minimal PEP RNA polymerase catalytic core is composed of four subunits: alpha, beta, beta', and beta''. When a (nuclear-encoded) sigma factor is associated with the core the holoenzyme is formed, which can initiate transcription. Mg(2+) is required as a cofactor. Requires Zn(2+) as cofactor.

It is found in the plastid. It localises to the chloroplast. It catalyses the reaction RNA(n) + a ribonucleoside 5'-triphosphate = RNA(n+1) + diphosphate. Functionally, DNA-dependent RNA polymerase catalyzes the transcription of DNA into RNA using the four ribonucleoside triphosphates as substrates. This chain is DNA-directed RNA polymerase subunit beta', found in Anthoceros angustus (Hornwort).